The following is a 208-amino-acid chain: UPF0323 lipoprotein HH_0014 (208 aa).

Positions 1-26 (MKHIHKIKNYAMVGGLGVMAVFALNA) are cleaved as a signal peptide. Residue C27 is the site of N-palmitoyl cysteine attachment. C27 carries the S-diacylglycerol cysteine lipid modification. The segment at 148 to 208 (ANSQRNYKSP…TNRNTGSMGS (61 aa)) is disordered. Composition is skewed to low complexity over residues 169–185 (SAKT…SGKS) and 193–208 (SSQS…SMGS).

The protein belongs to the UPF0323 family.

Its subcellular location is the cell membrane. The chain is UPF0323 lipoprotein HH_0014 from Helicobacter hepaticus (strain ATCC 51449 / 3B1).